We begin with the raw amino-acid sequence, 126 residues long: Profilin-1B (126 aa).

The tract at residues 2-36 is actin binding; the sequence is SWQTYVDTNLVGTGAVTQAAILGLDGNTWATSAGF. Lys104 bears the N6,N6,N6-trimethyllysine mark.

This sequence belongs to the profilin family. Occurs in many kinds of cells as a complex with monomeric actin in a 1:1 ratio.

The protein resides in the cytoplasm. It is found in the cytoskeleton. Its function is as follows. Binds to actin and affects the structure of the cytoskeleton. At high concentrations, profilin prevents the polymerization of actin, whereas it enhances it at low concentrations. By binding to PIP2, it inhibits the formation of IP3 and DG. This chain is Profilin-1B, found in Acanthamoeba castellanii (Amoeba).